Here is a 636-residue protein sequence, read N- to C-terminus: Chaperone protein HtpG (636 aa).

Residues 1 to 329 (MSKEHGAAAE…TEDLPLNISR (329 aa)) form an a; substrate-binding region. The segment at 330 to 550 (ETLQENALIA…DGGMTASMEK (221 aa)) is b. A c region spans residues 551–636 (LMRVMNKDES…TGWYAEVRKL (86 aa)).

The protein belongs to the heat shock protein 90 family. In terms of assembly, homodimer.

Its subcellular location is the cytoplasm. Molecular chaperone. Has ATPase activity. The sequence is that of Chaperone protein HtpG from Oleidesulfovibrio alaskensis (strain ATCC BAA-1058 / DSM 17464 / G20) (Desulfovibrio alaskensis).